Consider the following 376-residue polypeptide: Nuclear egress protein 1 (376 aa).

Ser19 carries the phosphoserine modification. The disordered stretch occupies residues 22–57 (RKRRQRELASKVASTVNGATSANNHGEPPSPADARP). Over residues 33 to 45 (VASTVNGATSANN) the composition is skewed to polar residues. A CCCH-type zinc finger spans residues 106–211 (CLDISPYGNE…HVIFENSDVH (106 aa)). The segment at 316-376 (VVSTNGCGPS…PLFLNSIRAP (61 aa)) is disordered. Positions 317–332 (VSTNGCGPSSSSQSTP) are enriched in polar residues.

Belongs to the herpesviridae NEC1 protein family. Forms a heterohexameric complex with NEC2. Interacts with capsid vertex specific component 2/CVC2; this interaction directs the capsid to the host inner nuclear membrane to initiate budding. Post-translationally, phosphorylated at serine residues in the N-terminus. This phosphorylation regulates the localization within the inner nuclear membrane. Phosphorylation by viral kinase UL97 at Ser-19 plays an important role for correct viral nuclear egress complex (NEC) localization.

The protein resides in the host nucleus inner membrane. Functionally, plays an essential role in virion nuclear egress, the first step of virion release from infected cell. Within the host nucleus, NEC1 interacts with the newly formed capsid through the vertexes and directs it to the inner nuclear membrane by associating with NEC2. Induces the budding of the capsid at the inner nuclear membrane as well as its envelopment into the perinuclear space. There, the NEC1/NEC2 complex promotes the fusion of the enveloped capsid with the outer nuclear membrane and the subsequent release of the viral capsid into the cytoplasm where it will reach the secondary budding sites in the host Golgi or trans-Golgi network. The chain is Nuclear egress protein 1 from Homo sapiens (Human).